A 595-amino-acid polypeptide reads, in one-letter code: Putative laccase-18 (595 aa).

The first 29 residues, 1-29 (MEKLSTAASLFGVVVAATALAMAVVGGEA), serve as a signal peptide directing secretion. Plastocyanin-like domains follow at residues 37-153 (MVHE…PRDG) and 162-316 (KDVP…YTGA). N-linked (GlcNAc...) asparagine glycosylation is found at N42 and N48. The Cu cation site is built by H87 and H89. N121 carries an N-linked (GlcNAc...) asparagine glycan. Cu cation is bound by residues H132 and H134. N206, N345, N382, N402, N409, N439, and N470 each carry an N-linked (GlcNAc...) asparagine glycan. The Plastocyanin-like 3 domain maps to 429 to 571 (DFPVRPPRPF…ATAFIVEDGP (143 aa)). The Cu cation site is built by N488, H491, H493, H550, C551, H552, H556, and M561. The disordered stretch occupies residues 570–595 (GPTPETSLPPPPPEFKRCGTNGLSQP).

Belongs to the multicopper oxidase family. Requires Cu cation as cofactor.

It is found in the secreted. It localises to the extracellular space. The protein localises to the apoplast. The enzyme catalyses 4 hydroquinone + O2 = 4 benzosemiquinone + 2 H2O. In terms of biological role, lignin degradation and detoxification of lignin-derived products. The protein is Putative laccase-18 (LAC18) of Oryza sativa subsp. indica (Rice).